The following is a 253-amino-acid chain: Complement C1q subcomponent subunit B (253 aa).

An N-terminal signal peptide occupies residues 1–25 (MKTQWGEVWTHLLLLLLGFLHVSWA). Glutamine 26 is subject to Pyrrolidone carboxylic acid. The Collagen-like domain maps to 29 to 112 (CTGPPGIPGI…GPRGPKGDSG (84 aa)). 5 positions are modified to 4-hydroxyproline: proline 33, proline 36, proline 39, proline 51, and proline 54. Residues 35 to 115 (IPGIPGVPGV…GPKGDSGDYG (81 aa)) form a disordered region. 2 positions are modified to 5-hydroxylysine: lysine 57 and lysine 60. Proline 63 bears the 4-hydroxyproline mark. Lysine 75 carries the 5-hydroxylysine modification. Positions 78 to 96 (PGIPGTPGKVGPKGPVGPK) are enriched in low complexity. A 4-hydroxyproline mark is found at proline 81 and proline 84. A 5-hydroxylysine mark is found at lysine 90 and lysine 96. 4-hydroxyproline is present on proline 99. Position 108 is a 5-hydroxylysine (lysine 108). Residues 115–253 (GATQKVAFSA…GFLLFPDMDA (139 aa)) form the C1q domain. The cysteines at positions 179 and 198 are disulfide-linked. Positions 199, 200, and 206 each coordinate Ca(2+).

As to quaternary structure, core component of the complement C1 complex, a calcium-dependent complex composed of 1 molecule of the C1Q subcomplex, 2 molecules of C1R and 2 molecules of C1S. The C1Q subcomplex is composed 18 subunits: 3 chains of C1QA, C1QB, and C1QC trimerize to form 6 collagen-like triple helices connected to six globular ligand-recognition modules (C1q domain). In terms of processing, hydroxylated on lysine and proline residues. Hydroxylated lysine residues can be glycosylated. Mouse C1Q contains up to 64.0 hydroxylysine-galactosylglucose residues. Total percentage hydroxylysine residues glycosylated is 95.1%. Contains no hydroxylysine-monosaccharides. Highest expression in thioglycolate-activated peritoneal macrophages. Also found in spleen, thymus and heart. Very weak expression liver, kidney, lung and intestine.

Its subcellular location is the secreted. It is found in the cell surface. Its activity is regulated as follows. The C1Q subcomplex is inhibited by sulfated molecules, such as triterpenoid sulfates, heparan sulfate, or chondroitin sulfates. Functionally, core component of the complement C1 complex, a multiprotein complex that initiates the classical pathway of the complement system, a cascade of proteins that leads to phagocytosis and breakdown of pathogens and signaling that strengthens the adaptive immune system. The classical complement pathway is initiated by the C1Q subcomplex of the C1 complex, which specifically binds IgG or IgM immunoglobulins complexed with antigens, forming antigen-antibody complexes on the surface of pathogens: C1QA, together with C1QB and C1QC, specifically recognizes and binds the Fc regions of IgG or IgM via its C1q domain. Immunoglobulin-binding activates the proenzyme C1R, which cleaves C1S, initiating the proteolytic cascade of the complement system. The C1Q subcomplex is activated by a hexamer of IgG complexed with antigens, while it is activated by a pentameric IgM. The C1Q subcomplex also recognizes and binds phosphatidylserine exposed on the surface of cells undergoing programmed cell death, possibly promoting activation of the complement system. The chain is Complement C1q subcomponent subunit B from Mus musculus (Mouse).